Here is a 124-residue protein sequence, read N- to C-terminus: Suppressor of RNA silencing (124 aa).

The interval 1-14 (MPKSEFFREERKRR) is basic motif (BM). Residues 30 to 68 (CGYSCGMPPAVEKVSVPADTEEDVYMLIFPYEQFCGEKH) form a C-2 region. Residues 72 to 124 (YESLKDVSDDELKLRRLERQRETLLASFQQKLKRYDEKIALLSEKFKNLRSKL) are a coiled coil. The residue at position 79 (Ser79) is a Phosphoserine.

This sequence belongs to the virgaviridae suppressor of RNA silencing family. In terms of assembly, homooligomer. Phosphorylated at Ser-79 by a host PKA-like kinase; the phosphorylation at this site seems to suppress host cell death.

Its subcellular location is the host chloroplast envelope. The protein localises to the host endoplasmic reticulum. It localises to the host cell junction. It is found in the host plasmodesma. Its function is as follows. Suppressor of RNA-mediated gene silencing, also known as post-transcriptional gene silencing (PTGS), a mechanism of plant viral defense that limits the accumulation of viral RNAs. Promotes viral cell-to-cell long distance movement. This is Suppressor of RNA silencing from Peanut clump virus (isolate 87/TGTA2) (PCV).